The sequence spans 418 residues: 1-acylglycerol-3-phosphate O-acyltransferase (418 aa).

Positions 121-251 (PTLVMVHGYG…RATWKGAVLN (131 aa)) constitute an AB hydrolase-1 domain. The short motif at 197–201 (GHSFG) is the GXSXG element. The HXXXXD motif signature appears at 379–384 (HFVFID).

Belongs to the peptidase S33 family. ABHD4/ABHD5 subfamily.

Its subcellular location is the cytoplasm. The catalysed reaction is a 1-acyl-sn-glycero-3-phosphate + an acyl-CoA = a 1,2-diacyl-sn-glycero-3-phosphate + CoA. Its function is as follows. Lysophosphatidic acid acyltransferase which functions in phosphatidic acid biosynthesis. Is highly specific for lysophosphatidic acid and able to use different acyl-CoA donors. May regulate neutral lipid accumulation and participate in the regulation of lipid turnover in vegetative cells. Possesses additional triacylglycerol lipase and phospholipase A2 activities in vitro. Is not active as esterase or lysophospholipase. The chain is 1-acylglycerol-3-phosphate O-acyltransferase from Arabidopsis thaliana (Mouse-ear cress).